A 420-amino-acid chain; its full sequence is Synaptosomal-associated protein 47 (420 aa).

T-SNARE coiled-coil homology domains are found at residues 110 to 172 (AEAA…LTEL) and 357 to 419 (TSEP…MKKL). Residues 338–357 (ATHCEPSSGSQEGRPLQLQT) form a disordered region. Positions 342–357 (EPSSGSQEGRPLQLQT) are enriched in polar residues.

Belongs to the SVAP1 family. Forms a complex containing SNAP47, VAMP2 and STX1A. Associates with the BLOC-1 complex. Interacts with BLOC1S6.

It is found in the endomembrane system. Its subcellular location is the cytoplasm. The protein resides in the perinuclear region. In terms of biological role, may play a role in intracellular membrane fusion. This Bos taurus (Bovine) protein is Synaptosomal-associated protein 47 (SNAP47).